Here is a 446-residue protein sequence, read N- to C-terminus: NAD(P)H sulfur oxidoreductase (CoA-dependent) (446 aa).

17–18 contacts FAD; the sequence is AA. Arginine 28 is a CoA binding site. Residues 39–40 and 46–48 each bind FAD; these read EA and HAP. CoA-binding positions include 45–49, 66–67, and arginine 76; these read SHAPC and HY. Cysteine 49 functions as the Redox-active in the catalytic mechanism. Residues valine 86, aspartate 284, and alanine 302 each contribute to the FAD site. Positions 306 and 362 each coordinate CoA. Tyrosine 426 serves as a coordination point for FAD. Residues tryptophan 434 and arginine 442 each contribute to the CoA site.

Belongs to the class-III pyridine nucleotide-disulfide oxidoreductase family. Requires FAD as cofactor.

It carries out the reaction hydrogen sulfide + NADP(+) = sulfur + NADPH. It catalyses the reaction hydrogen sulfide + NAD(+) = sulfur + NADH. In terms of biological role, catalyzes the CoA-dependent reduction of elemental sulfur (S(0)) to produce hydrogen sulfide. This chain is NAD(P)H sulfur oxidoreductase (CoA-dependent), found in Pyrococcus abyssi (strain GE5 / Orsay).